Here is a 384-residue protein sequence, read N- to C-terminus: tRNA(Met) cytidine acetate ligase (384 aa).

ATP-binding positions include 7–20 (VAEY…HEFL), G101, N153, and R178.

Belongs to the TmcAL family.

The protein localises to the cytoplasm. It catalyses the reaction cytidine(34) in elongator tRNA(Met) + acetate + ATP = N(4)-acetylcytidine(34) in elongator tRNA(Met) + AMP + diphosphate. Its function is as follows. Catalyzes the formation of N(4)-acetylcytidine (ac(4)C) at the wobble position of elongator tRNA(Met), using acetate and ATP as substrates. First activates an acetate ion to form acetyladenylate (Ac-AMP) and then transfers the acetyl group to tRNA to form ac(4)C34. This is tRNA(Met) cytidine acetate ligase from Lactobacillus delbrueckii subsp. bulgaricus (strain ATCC BAA-365 / Lb-18).